Reading from the N-terminus, the 45-residue chain is uncharacterized protein (45 aa).

A helical transmembrane segment spans residues 5–25; that stretch reads IFFIFALSGILAACTVGGGVS.

It is found in the membrane. This is an uncharacterized protein from Haemophilus influenzae (strain ATCC 51907 / DSM 11121 / KW20 / Rd).